Consider the following 622-residue polypeptide: Palmitoyltransferase ZDHHC17 (622 aa).

At M1–K294 the chain is on the cytoplasmic side. Positions M1–V295 are necessary and sufficient for interaction with DNAJC5 and SNAP25. ANK repeat units lie at residues T41–P76, E79–Q108, L113–L142, E146–M175, N179–L209, H214–A243, and K247–Y276. A run of 2 helical transmembrane segments spans residues V295–I315 and D316–S336. The Lumenal segment spans residues K337–A347. A helical transmembrane segment spans residues L348–F368. Over W369–D371 the chain is Cytoplasmic. The chain crosses the membrane as a helical span at residues L372–F392. Over G393 to R470 the chain is Lumenal. Residues I427 to F477 enclose the DHHC domain. The active-site S-palmitoyl cysteine intermediate is the C457. The helical transmembrane segment at Y471–V491 threads the bilayer. Residues S492–G506 lie on the Cytoplasmic side of the membrane. The chain crosses the membrane as a helical span at residues F507–L526. Topologically, residues N527–V529 are lumenal. A helical membrane pass occupies residues F530–T552. Residues T553–V622 are Cytoplasmic-facing.

The protein belongs to the DHHC palmitoyltransferase family. AKR/ZDHHC17 subfamily. Interacts (via ANK repeats) with numerous proteins (via the consensus sequence motif [VIAP]-[VIT]-x-x-Q-P). Interacts (via ANK repeats) with CLIP3. Interacts (via ANK repeats) with HTT. Interacts (via ANK repeats) with DNAJC5 (via C-terminus). Interacts (via ANK repeats) with MAP6. Interacts (via ANK repeats) with SNAP23. Interacts (via ANK repeats) with SNAP25. Interacts (via ANK repeats) with EVL. Interacts with SPRED1 and SPRED3. Interacts with GPM6A and OPTN. May interact (via ANK repeats) with SPRED2. May interact with NTRK1; may regulate its localization and function. Autopalmitoylated. Autopalmitoylation has a regulatory role in ZDHHC17-mediated Mg(2+) transport.

Its subcellular location is the golgi apparatus membrane. The protein resides in the cytoplasmic vesicle membrane. The protein localises to the presynaptic cell membrane. It carries out the reaction L-cysteinyl-[protein] + hexadecanoyl-CoA = S-hexadecanoyl-L-cysteinyl-[protein] + CoA. It catalyses the reaction L-cysteinyl-[protein] + tetradecanoyl-CoA = S-tetradecanoyl-L-cysteinyl-[protein] + CoA. The catalysed reaction is L-cysteinyl-[protein] + octadecanoyl-CoA = S-octadecanoyl-L-cysteinyl-[protein] + CoA. Functionally, palmitoyltransferase that catalyzes the addition of palmitate onto various protein substrates and is involved in a variety of cellular processes. Has no stringent fatty acid selectivity and in addition to palmitate can also transfer onto target proteins myristate from tetradecanoyl-CoA and stearate from octadecanoyl-CoA. Palmitoyltransferase specific for a subset of neuronal proteins, including SNAP25, DLG4/PSD95, GAD2, SYT1 and HTT. Also palmitoylates neuronal protein GPM6A as well as SPRED1 and SPRED3. Could also play a role in axonogenesis through the regulation of NTRK1 and the downstream ERK1/ERK2 signaling cascade. May be involved in the sorting or targeting of critical proteins involved in the initiating events of endocytosis at the plasma membrane. May play a role in Mg(2+) transport. Could also palmitoylate DNAJC5 and regulate its localization to the Golgi membrane. Palmitoylates CASP6, thereby preventing its dimerization and subsequent activation. The sequence is that of Palmitoyltransferase ZDHHC17 from Rattus norvegicus (Rat).